The chain runs to 392 residues: Formate-dependent phosphoribosylglycinamide formyltransferase (392 aa).

Residues 12–13 and Glu-72 each bind N(1)-(5-phospho-beta-D-ribosyl)glycinamide; that span reads EL. ATP contacts are provided by residues Arg-104, Lys-145, 150 to 155, 185 to 188, and Glu-193; these read SSGKGQ and EAFV. One can recognise an ATP-grasp domain in the interval 109–300; the sequence is DLAARDLGLR…EFELHARAVL (192 aa). Mg(2+) contacts are provided by Glu-258 and Glu-270. N(1)-(5-phospho-beta-D-ribosyl)glycinamide is bound by residues Asp-277, Lys-348, and 355 to 356; that span reads RR.

The protein belongs to the PurK/PurT family. Homodimer.

The catalysed reaction is N(1)-(5-phospho-beta-D-ribosyl)glycinamide + formate + ATP = N(2)-formyl-N(1)-(5-phospho-beta-D-ribosyl)glycinamide + ADP + phosphate + H(+). Its pathway is purine metabolism; IMP biosynthesis via de novo pathway; N(2)-formyl-N(1)-(5-phospho-D-ribosyl)glycinamide from N(1)-(5-phospho-D-ribosyl)glycinamide (formate route): step 1/1. Functionally, involved in the de novo purine biosynthesis. Catalyzes the transfer of formate to 5-phospho-ribosyl-glycinamide (GAR), producing 5-phospho-ribosyl-N-formylglycinamide (FGAR). Formate is provided by PurU via hydrolysis of 10-formyl-tetrahydrofolate. This chain is Formate-dependent phosphoribosylglycinamide formyltransferase, found in Chlorobaculum tepidum (strain ATCC 49652 / DSM 12025 / NBRC 103806 / TLS) (Chlorobium tepidum).